The chain runs to 147 residues: Auxin-responsive protein SAUR41 (147 aa).

It belongs to the ARG7 family. As to expression, specifically expressed in the quiescent center and cortex or endodermis initials of root stem niches. Expressed in vascular tissues from hypocotyls, petioles and cotyledons.

It is found in the cytoplasm. In terms of biological role, plays a role in the regulation of cell expansion, root meristem patterning and auxin transport. This Arabidopsis thaliana (Mouse-ear cress) protein is Auxin-responsive protein SAUR41.